The following is a 1027-amino-acid chain: Fibril-forming collagen alpha chain (1027 aa).

The tract at residues 1-12 (YRAGPRYIQAQV) is nonhelical region (N-terminal). The segment at 1–1027 (YRAGPRYIQA…GPPGNSDYGA (1027 aa)) is disordered. Residues 13–1023 (GPIGPRGPPG…PGPPGPPGNS (1011 aa)) are triple-helical region. Residues 17 to 26 (PRGPPGPPGS) are compositionally biased toward pro residues. A 4-hydroxyproline; partial mark is found at Pro-21 and Pro-24. Residues Pro-27 and Pro-39 each carry the 4-hydroxyproline modification. A 3-hydroxyproline; partial modification is found at Pro-53. A 4-hydroxyproline modification is found at Pro-54. The span at 63-72 (SGDDGRDGEP) shows a compositional bias: basic and acidic residues. 4-hydroxyproline; partial is present on Pro-72. Residues 73-91 (GPRGGIGPMGPRGAGGMPG) show a composition bias toward gly residues. 4-hydroxyproline occurs at positions 90 and 93. Residues Lys-96 and Lys-108 each carry the 5-hydroxylysine modification. Residues Lys-96 and Lys-108 are each glycosylated (O-linked (Gal...) hydroxylysine). Residues Pro-123 and Pro-128 each carry the 4-hydroxyproline; partial modification. Pro-150 carries the post-translational modification 4-hydroxyproline. At Pro-161 the chain carries 3-hydroxyproline; partial. A 4-hydroxyproline modification is found at Pro-162. Pro-164 bears the 3-hydroxyproline; partial mark. 4-hydroxyproline occurs at positions 165, 174, 177, and 180. Residues 168-182 (IGSTGSPGFPGTPGS) are compositionally biased toward low complexity. Lys-183 and Lys-192 each carry 5-hydroxylysine. O-linked (Gal...) hydroxylysine glycosylation occurs at Lys-192. Pro-207, Pro-216, Pro-219, Pro-228, and Pro-237 each carry 4-hydroxyproline. Residues 227-249 (EPGASGESGLPGPSGFPGPRGMP) show a composition bias toward low complexity. Position 243 is a 4-hydroxyproline; partial (Pro-243). Pro-249 and Pro-255 each carry 4-hydroxyproline. Gly residues predominate over residues 259-268 (GAKGDGGPTG). The residue at position 261 (Lys-261) is a 5-hydroxylysine. A glycan (O-linked (Gal...) hydroxylysine) is linked at Lys-261. Pro-273 and Pro-276 each carry 4-hydroxyproline; partial. Lys-279 bears the 5-hydroxylysine mark. An O-linked (Gal...) hydroxylysine glycan is attached at Lys-279. 4-hydroxyproline; partial is present on residues Pro-285, Pro-291, and Pro-303. 4-hydroxyproline is present on residues Pro-306, Pro-312, Pro-321, Pro-327, and Pro-339. Lys-342 carries the 5-hydroxylysine modification. The residue at position 348 (Pro-348) is a 4-hydroxyproline; partial. Residue Lys-351 is modified to 5-hydroxylysine; partial. 4-hydroxyproline is present on residues Pro-366, Pro-372, and Pro-375. Basic and acidic residues predominate over residues 380-396 (RPGKDGRPGIRGKDGKQ). Pro-381 carries the post-translational modification 4-hydroxyproline; partial. A 4-hydroxyproline modification is found at Pro-387. The segment covering 398 to 420 (EQGPQGPQGLAGLQGRAGPPGAR) has biased composition (low complexity). The residue at position 416 (Pro-416) is a 3-hydroxyproline; partial. 4-hydroxyproline is present on residues Pro-417, Pro-423, Pro-429, and Pro-432. Residues 437 to 446 (EQGDAGKDGE) are compositionally biased toward basic and acidic residues. The span at 447-480 (TGAAGPPGAAGPTGARGPPGPRGQQGFQGLAGAQ) shows a compositional bias: low complexity. Pro-453, Pro-465, and Pro-483 each carry 4-hydroxyproline. Residues Pro-500, Pro-503, and Pro-506 each carry the 4-hydroxyproline; partial modification. The segment covering 502–511 (GPAGPGGERG) has biased composition (gly residues). 4-hydroxyproline is present on residues Pro-513 and Pro-525. A compositionally biased stretch (low complexity) spans 527–543 (ERGATGPAGPTGSPGVA). 4-hydroxyproline; partial is present on residues Pro-533 and Pro-536. Pro-540 is subject to 4-hydroxyproline. A 5-hydroxylysine modification is found at Lys-546. The residue at position 551 (Pro-551) is a 3-hydroxyproline; partial. 4-hydroxyproline occurs at positions 552 and 561. Residues Lys-567 and Lys-573 each carry the 5-hydroxylysine modification. Lys-573 is a glycosylation site (O-linked (Gal...) hydroxylysine). A compositionally biased stretch (basic and acidic residues) spans 575–599 (SRGDIGPRGKAGERGKDGERGERGE). 4-hydroxyproline is present on Pro-603. A 5-hydroxylysine modification is found at Lys-612. An O-linked (Gal...) hydroxylysine glycan is attached at Lys-612. At Pro-621 the chain carries 4-hydroxyproline; partial. A 4-hydroxyproline modification is found at Pro-627. Positions 635 to 644 (PAGSQGIQGQ) are enriched in low complexity. The residue at position 645 (Pro-645) is a 4-hydroxyproline; partial. At Pro-647 the chain carries 3-hydroxyproline; partial. 4-hydroxyproline is present on Pro-648. Lys-657 is modified (5-hydroxylysine). Lys-657 is a glycosylation site (O-linked (Gal...) hydroxylysine). Residues Pro-663, Pro-708, Pro-711, Pro-714, Pro-717, and Pro-723 each carry the 4-hydroxyproline modification. The span at 698 to 710 (ETGAQGEIGLPGS) shows a compositional bias: low complexity. Residues 714–726 (PGLPGPSGQPGPS) are compositionally biased toward pro residues. Lys-738 carries the 5-hydroxylysine modification. A glycan (O-linked (Gal...) hydroxylysine) is linked at Lys-738. 4-hydroxyproline is present on residues Pro-744 and Pro-759. Residues 750–771 (QGDRGSDGEPGRDGTKGERGED) show a composition bias toward basic and acidic residues. At Lys-765 the chain carries 5-hydroxylysine. Lys-765 is a glycosylation site (O-linked (Gal...) hydroxylysine). Pro-773 is subject to 3-hydroxyproline; partial. A 4-hydroxyproline mark is found at Pro-774, Pro-783, and Pro-792. Gly residues predominate over residues 802 to 814 (GPMGGQGMKGDGG). Position 810 is a 5-hydroxylysine (Lys-810). Lys-810 is a glycosylation site (O-linked (Gal...) hydroxylysine). Pro-815 is subject to 3-hydroxyproline; partial. A 4-hydroxyproline mark is found at Pro-816, Pro-843, Pro-849, Pro-855, Pro-861, Pro-867, Pro-888, Pro-894, Pro-903, and Pro-915. Residues 828-848 (AGPQGPTGPSGQAGAPGQEGA) show a composition bias toward low complexity. The segment covering 884-894 (QRGLPGAAGPP) has biased composition (low complexity). Residues 911-927 (PVGAPGSQGPAGIMGMK) show a composition bias toward low complexity. A 5-hydroxylysine modification is found at Lys-927. Lys-927 carries O-linked (Gal...) hydroxylysine glycosylation. Lys-933 is subject to 5-hydroxylysine; partial. 2 positions are modified to 5-hydroxylysine: Lys-936 and Lys-939. A glycan (O-linked (Gal...) hydroxylysine) is linked at Lys-936. Over residues 942-962 (TGLPGLQGLQGTPGHSGESGP) the composition is skewed to low complexity. Pro-945 carries the 4-hydroxyproline modification. 4-hydroxyproline; partial is present on Pro-954. 4-hydroxyproline occurs at positions 963 and 966. Positions 973–982 (GEAGGRGSQG) are enriched in gly residues. The segment covering 983-1001 (PPGKDGQPGPSGRVGPRGP) has biased composition (low complexity). A 4-hydroxyproline mark is found at Pro-984 and Pro-990. Pro-1010 bears the 3-hydroxyproline; partial mark. Residues 1010–1020 (PPGPPGPPGPP) show a composition bias toward pro residues. Pro-1011 is subject to 4-hydroxyproline. At Pro-1013 the chain carries 3-hydroxyproline; partial. Pro-1014 is modified (4-hydroxyproline). Pro-1016 is subject to 3-hydroxyproline; partial. Pro-1017 carries the post-translational modification 4-hydroxyproline. Pro-1019 carries the 3-hydroxyproline; partial modification. Pro-1020 carries the 4-hydroxyproline modification. The interval 1024 to 1027 (DYGA) is nonhelical region (C-terminal).

As to quaternary structure, homotetramer.

It is found in the secreted. It localises to the extracellular space. Its subcellular location is the extracellular matrix. Functionally, fibril-forming collagen. In Riftia pachyptila (Vent tube worm), this protein is Fibril-forming collagen alpha chain.